Here is a 246-residue protein sequence, read N- to C-terminus: UPF0309 protein ABC0887 (246 aa).

Positions 33 to 212 constitute an SIS domain; it reads MVHAIKEGKS…VLKMIEQLEE (180 aa).

It belongs to the UPF0309 family.

This is UPF0309 protein ABC0887 from Shouchella clausii (strain KSM-K16) (Alkalihalobacillus clausii).